The following is a 314-amino-acid chain: Ribonuclease Z (314 aa).

Zn(2+)-binding residues include histidine 60, histidine 62, aspartate 64, histidine 65, histidine 140, aspartate 209, and histidine 269. Aspartate 64 functions as the Proton acceptor in the catalytic mechanism.

This sequence belongs to the RNase Z family. Homodimer. Requires Zn(2+) as cofactor.

It carries out the reaction Endonucleolytic cleavage of RNA, removing extra 3' nucleotides from tRNA precursor, generating 3' termini of tRNAs. A 3'-hydroxy group is left at the tRNA terminus and a 5'-phosphoryl group is left at the trailer molecule.. In terms of biological role, zinc phosphodiesterase, which displays some tRNA 3'-processing endonuclease activity. Probably involved in tRNA maturation, by removing a 3'-trailer from precursor tRNA. This Methanococcus maripaludis (strain C5 / ATCC BAA-1333) protein is Ribonuclease Z.